A 337-amino-acid polypeptide reads, in one-letter code: 1-aminocyclopropane-1-carboxylate deaminase (337 aa).

Lysine 50 carries the N6-(pyridoxal phosphate)lysine modification. Serine 77 serves as the catalytic Nucleophile.

This sequence belongs to the ACC deaminase/D-cysteine desulfhydrase family. As to quaternary structure, homotrimer. The cofactor is pyridoxal 5'-phosphate.

It carries out the reaction 1-aminocyclopropane-1-carboxylate + H2O = 2-oxobutanoate + NH4(+). Its function is as follows. Catalyzes a cyclopropane ring-opening reaction, the irreversible conversion of 1-aminocyclopropane-1-carboxylate (ACC) to ammonia and alpha-ketobutyrate. Allows growth on ACC as a nitrogen source. This Methylobacterium sp. (strain 4-46) protein is 1-aminocyclopropane-1-carboxylate deaminase.